An 86-amino-acid polypeptide reads, in one-letter code: Small ribosomal subunit protein bS20 (86 aa).

The protein belongs to the bacterial ribosomal protein bS20 family.

Its function is as follows. Binds directly to 16S ribosomal RNA. This chain is Small ribosomal subunit protein bS20, found in Mycolicibacterium gilvum (strain PYR-GCK) (Mycobacterium gilvum (strain PYR-GCK)).